A 574-amino-acid chain; its full sequence is ESX-1 secretion system protein EccA1 (574 aa).

335–342 (GPPGTGKT) is a binding site for ATP.

The protein belongs to the CbxX/CfxQ family. Part of the ESX-1 / type VII secretion system (T7SS), which is composed of cytosolic and membrane components.

It localises to the cytoplasm. Part of the ESX-1 / type VII specialized secretion system (T7SS), which exports several proteins including EsxA and EsxB. Plays a role in DNA conjugation, in both donor and recipient strains. EccA1 exhibits ATPase activity and may provide energy for the export of ESX-1 substrates. This is ESX-1 secretion system protein EccA1 from Mycolicibacterium smegmatis (strain ATCC 700084 / mc(2)155) (Mycobacterium smegmatis).